Reading from the N-terminus, the 518-residue chain is Putative cysteine ligase BshC (518 aa).

Residues 404 to 474 (AAASAERLAA…RARQLTRLKR (71 aa)) are a coiled coil.

Belongs to the BshC family.

The sequence is that of Putative cysteine ligase BshC from Deinococcus geothermalis (strain DSM 11300 / CIP 105573 / AG-3a).